Consider the following 500-residue polypeptide: Citrate lyase alpha chain (500 aa).

In terms of assembly, oligomer with a subunit composition of (alpha,beta,gamma)6.

The protein localises to the cytoplasm. The enzyme catalyses citrate = oxaloacetate + acetate. It carries out the reaction citrate + acetyl-CoA = (3S)-citryl-CoA + acetate. Its function is as follows. Represents a citrate:acetyl-ACP transferase. The protein is Citrate lyase alpha chain (citF) of Haemophilus influenzae (strain ATCC 51907 / DSM 11121 / KW20 / Rd).